We begin with the raw amino-acid sequence, 106 residues long: UPF0642 protein YBL028C (106 aa).

The span at 1–12 (MAKSLRASSHLN) shows a compositional bias: polar residues. Disordered stretches follow at residues 1–21 (MAKSLRASSHLNAKSVKRRGV) and 52–106 (KEEQ…FTRF). Over residues 62-72 (DEKKSNEEAPR) the composition is skewed to basic and acidic residues. Positions 83–106 (GRHHTYKKAKLMKQSKKKTSFTRF) are enriched in basic residues.

Belongs to the UPF0642 family.

The polypeptide is UPF0642 protein YBL028C (Saccharomyces cerevisiae (strain ATCC 204508 / S288c) (Baker's yeast)).